Consider the following 194-residue polypeptide: Putative manganese efflux pump MntP (194 aa).

The next 6 helical transmembrane spans lie at 3-23 (PFSI…AAIG), 37-57 (LRAG…GWLL), 69-89 (DHWI…VAGL), 110-132 (LGLA…SLAF), 147-167 (CTFS…NLIG), and 172-192 (MLGG…HLSG).

The protein belongs to the MntP (TC 9.B.29) family.

The protein resides in the cell inner membrane. Functionally, probably functions as a manganese efflux pump. The polypeptide is Putative manganese efflux pump MntP (Xanthomonas euvesicatoria pv. vesicatoria (strain 85-10) (Xanthomonas campestris pv. vesicatoria)).